Consider the following 638-residue polypeptide: Probable glycerol-3-phosphate dehydrogenase, mitochondrial (638 aa).

100-128 is an FAD binding site; the sequence is DLIVIGGGATGTGVALDAQSRGMKVALFE.

It belongs to the FAD-dependent glycerol-3-phosphate dehydrogenase family. It depends on FAD as a cofactor.

The protein localises to the mitochondrion. The catalysed reaction is a quinone + sn-glycerol 3-phosphate = dihydroxyacetone phosphate + a quinol. It participates in polyol metabolism; glycerol degradation via glycerol kinase pathway; glycerone phosphate from sn-glycerol 3-phosphate (anaerobic route): step 1/1. The protein is Probable glycerol-3-phosphate dehydrogenase, mitochondrial of Dictyostelium discoideum (Social amoeba).